A 765-amino-acid chain; its full sequence is 5-methyltetrahydropteroyltriglutamate--homocysteine methyltransferase (765 aa).

Lys-18 and Asn-116 together coordinate 5-methyltetrahydropteroyltri-L-glutamate. L-homocysteine contacts are provided by residues 437 to 439 (IGS) and Glu-490. Residues 437–439 (IGS) and Glu-490 contribute to the L-methionine site. Residues Asp-495, Tyr-518, 521-522 (RC), and Trp-567 contribute to the 5-methyltetrahydropteroyltri-L-glutamate site. Residue Asp-605 participates in L-homocysteine binding. Residue Asp-605 coordinates L-methionine. Positions 647, 649, 658, 662, and 671 each coordinate Zn(2+). His-701 acts as the Proton donor in catalysis. Residue Cys-733 participates in Zn(2+) binding.

The protein belongs to the vitamin-B12 independent methionine synthase family. Zn(2+) is required as a cofactor.

The protein resides in the cytoplasm. It catalyses the reaction 5-methyltetrahydropteroyltri-L-glutamate + L-homocysteine = tetrahydropteroyltri-L-glutamate + L-methionine. It functions in the pathway amino-acid biosynthesis; L-methionine biosynthesis via de novo pathway; L-methionine from L-homocysteine (MetE route): step 1/1. Catalyzes the transfer of a methyl group from 5-methyltetrahydrofolate to homocysteine resulting in methionine formation. The chain is 5-methyltetrahydropteroyltriglutamate--homocysteine methyltransferase (METE) from Mesembryanthemum crystallinum (Common ice plant).